We begin with the raw amino-acid sequence, 348 residues long: Ferrochelatase (348 aa).

2 residues coordinate Fe cation: histidine 218 and glutamate 299.

Belongs to the ferrochelatase family.

Its subcellular location is the cytoplasm. The enzyme catalyses heme b + 2 H(+) = protoporphyrin IX + Fe(2+). The protein operates within porphyrin-containing compound metabolism; protoheme biosynthesis; protoheme from protoporphyrin-IX: step 1/1. Its function is as follows. Catalyzes the ferrous insertion into protoporphyrin IX. The sequence is that of Ferrochelatase from Methylocella silvestris (strain DSM 15510 / CIP 108128 / LMG 27833 / NCIMB 13906 / BL2).